The chain runs to 96 residues: uncharacterized protein (96 aa).

This is an uncharacterized protein from Saimiriine herpesvirus 2 (strain 11) (SaHV-2).